Here is a 372-residue protein sequence, read N- to C-terminus: Protein phosphatase 1 regulatory subunit 42 (372 aa).

LRR repeat units lie at residues 30-51 (RITH…TMCR), 52-71 (NLTV…NLGS), 72-93 (NLTH…SGLK), 94-115 (RLEK…EGLR), 116-137 (ELRE…LFDP), 146-167 (SLSV…AVLE), and 168-189 (NLTQ…EFVL). An LRRCT domain is found at 203–241 (NPVCLKPKYREKVTIISKTLEILDGKEIKEMARQFLLNW).

It is found in the cytoplasm. It localises to the cytoskeleton. The protein localises to the microtubule organizing center. The protein resides in the centrosome. Functionally, may regulate phosphatase activity of protein phosphatase 1 (PP1) complexes. This is Protein phosphatase 1 regulatory subunit 42 (ppp1r42) from Xenopus laevis (African clawed frog).